Consider the following 121-residue polypeptide: Flagellar protein FliT (121 aa).

Residues 1–50 (MNHAPHLYFAWQQLVEKSQLMLRLATEEQWDELIASEMAYVNAVQEIAHL) are required for homodimerization. Residues 60 to 98 (MQEQLRPMLRLILDNESKVKQLLQIRMDELAKLVGQSSV) are fliD binding.

It belongs to the FliT family. As to quaternary structure, homodimer. Interacts with FliD and FlhC.

It localises to the cytoplasm. Its subcellular location is the cytosol. Dual-function protein that regulates the transcription of class 2 flagellar operons and that also acts as an export chaperone for the filament-capping protein FliD. As a transcriptional regulator, acts as an anti-FlhDC factor; it directly binds FlhC, thus inhibiting the binding of the FlhC/FlhD complex to class 2 promoters, resulting in decreased expression of class 2 flagellar operons. As a chaperone, effects FliD transition to the membrane by preventing its premature polymerization, and by directing it to the export apparatus. The chain is Flagellar protein FliT from Escherichia coli O8 (strain IAI1).